We begin with the raw amino-acid sequence, 518 residues long: Probable protein phosphatase 2C 14 (518 aa).

Low complexity-rich tracts occupy residues Met1–Ser10 and Pro86–Ala105. 2 disordered regions span residues Met1–Gln31 and Pro86–Arg108. The region spanning Val129 to Leu437 is the PPM-type phosphatase domain. Asp165 and Gly166 together coordinate Mn(2+). Positions Thr192–Gln222 are disordered. Residues Gln197–Pro213 show a composition bias toward polar residues. Mn(2+)-binding residues include Asp382 and Asp428.

The protein belongs to the PP2C family. It depends on Mg(2+) as a cofactor. The cofactor is Mn(2+).

The enzyme catalyses O-phospho-L-seryl-[protein] + H2O = L-seryl-[protein] + phosphate. The catalysed reaction is O-phospho-L-threonyl-[protein] + H2O = L-threonyl-[protein] + phosphate. In Oryza sativa subsp. japonica (Rice), this protein is Probable protein phosphatase 2C 14.